Consider the following 383-residue polypeptide: tRNA(Met) cytidine acetate ligase (383 aa).

ATP contacts are provided by residues 7–20 (IAEFNPFHSGHEFL), Gly-101, Asn-153, and 178–179 (RI).

The protein belongs to the TmcAL family.

The protein resides in the cytoplasm. It catalyses the reaction cytidine(34) in elongator tRNA(Met) + acetate + ATP = N(4)-acetylcytidine(34) in elongator tRNA(Met) + AMP + diphosphate. Catalyzes the formation of N(4)-acetylcytidine (ac(4)C) at the wobble position of elongator tRNA(Met), using acetate and ATP as substrates. First activates an acetate ion to form acetyladenylate (Ac-AMP) and then transfers the acetyl group to tRNA to form ac(4)C34. The polypeptide is tRNA(Met) cytidine acetate ligase (Lactobacillus helveticus (strain DPC 4571)).